Consider the following 154-residue polypeptide: Protein-export protein SecB (154 aa).

Belongs to the SecB family. As to quaternary structure, homotetramer, a dimer of dimers. One homotetramer interacts with 1 SecA dimer.

The protein resides in the cytoplasm. In terms of biological role, one of the proteins required for the normal export of preproteins out of the cell cytoplasm. It is a molecular chaperone that binds to a subset of precursor proteins, maintaining them in a translocation-competent state. It also specifically binds to its receptor SecA. The polypeptide is Protein-export protein SecB (Vibrio cholerae serotype O1 (strain ATCC 39541 / Classical Ogawa 395 / O395)).